The following is a 355-amino-acid chain: Peptide chain release factor 1 (355 aa).

Position 233 is an N5-methylglutamine (glutamine 233).

Belongs to the prokaryotic/mitochondrial release factor family. In terms of processing, methylated by PrmC. Methylation increases the termination efficiency of RF1.

Its subcellular location is the cytoplasm. In terms of biological role, peptide chain release factor 1 directs the termination of translation in response to the peptide chain termination codons UAG and UAA. The sequence is that of Peptide chain release factor 1 from Caldicellulosiruptor bescii (strain ATCC BAA-1888 / DSM 6725 / KCTC 15123 / Z-1320) (Anaerocellum thermophilum).